A 187-amino-acid polypeptide reads, in one-letter code: Oleosin Zm-II (187 aa).

At alanine 2 the chain carries N-acetylalanine. The polar stretch occupies residues 2–51 (ADRDRSGIYGGAHATYGQQQQQGGGGRPMGEQVKKGMLHDKGPTASQALT). The segment at 17–42 (YGQQQQQGGGGRPMGEQVKKGMLHDK) is disordered. A compositionally biased stretch (basic and acidic residues) spans 33–42 (QVKKGMLHDK). Transmembrane regions (helical) follow at residues 50-70 (LTVA…GLAL), 83-103 (VFLI…TAVM), and 104-124 (GFLT…CLAN). The segment at 52 to 123 (VATLFPLGGL…GGLSSLTCLA (72 aa)) is hydrophobic. Over residues 155-169 (TAQAGQAIQGRAQEA) the composition is skewed to low complexity. The interval 155-187 (TAQAGQAIQGRAQEAGTGGGAGAGAGGGGRASS) is disordered. The segment covering 170–187 (GTGGGAGAGAGGGGRASS) has biased composition (gly residues).

The protein belongs to the oleosin family. In terms of processing, the N-terminus is blocked. As to expression, found in embryonic axis, scutellum, and aleurone layer.

It localises to the lipid droplet. The protein resides in the membrane. May have a structural role to stabilize the lipid body during desiccation of the seed by preventing coalescence of the oil. Probably interacts with both lipid and phospholipid moieties of lipid bodies. May also provide recognition signals for specific lipase anchorage in lipolysis during seedling growth. This chain is Oleosin Zm-II (OLE18), found in Zea mays (Maize).